An 833-amino-acid polypeptide reads, in one-letter code: Leucine--tRNA ligase (833 aa).

Positions 41-52 (PYPSGAGLHVGH) match the 'HIGH' region motif. The 'KMSKS' region signature appears at 610–614 (KMSKS). Position 613 (Lys613) interacts with ATP.

Belongs to the class-I aminoacyl-tRNA synthetase family.

It is found in the cytoplasm. It carries out the reaction tRNA(Leu) + L-leucine + ATP = L-leucyl-tRNA(Leu) + AMP + diphosphate. In Streptococcus equi subsp. zooepidemicus (strain MGCS10565), this protein is Leucine--tRNA ligase.